The primary structure comprises 465 residues: Purple acid phosphatase 2 (465 aa).

Residues 1 to 32 (MGASRTGCYLLAVVLAAVMNAAIAGITSSFIR) form the signal peptide. Residues Asn110 and Asn138 are each glycosylated (N-linked (GlcNAc...) asparagine). Asp164 contributes to the Fe cation binding site. N-linked (GlcNAc...) asparagine glycosylation is present at Asn172. Asp193 and Tyr196 together coordinate Fe cation. Asp193 is a binding site for Mn(2+). Asn230 serves as a coordination point for Mn(2+). Residue Asn230 coordinates substrate. A glycan (N-linked (GlcNAc...) asparagine) is linked at Asn303. Residue His315 coordinates Mn(2+). His325 functions as the Proton donor in the catalytic mechanism. Residue His352 participates in Mn(2+) binding. 352–354 (HVH) contacts substrate. Fe cation is bound at residue His354. Asn400 and Asn425 each carry an N-linked (GlcNAc...) asparagine glycan.

The protein belongs to the metallophosphoesterase superfamily. Purple acid phosphatase family. As to quaternary structure, homodimer; disulfide-linked. Fe cation serves as cofactor. The cofactor is Mn(2+). It depends on Zn(2+) as a cofactor. Requires Cu(2+) as cofactor. Mg(2+) is required as a cofactor.

It localises to the secreted. It carries out the reaction a phosphate monoester + H2O = an alcohol + phosphate. This is Purple acid phosphatase 2 (PAP2) from Ipomoea batatas (Sweet potato).